Consider the following 197-residue polypeptide: Small ribosomal subunit protein eS1 (197 aa).

Belongs to the eukaryotic ribosomal protein eS1 family.

The polypeptide is Small ribosomal subunit protein eS1 (Methanoculleus marisnigri (strain ATCC 35101 / DSM 1498 / JR1)).